The primary structure comprises 222 residues: Inositol diphosphatase DSP1 (222 aa).

Residues 1 to 14 show a composition bias toward polar residues; that stretch reads MRQEATCSLVLTQD. Positions 1-41 are disordered; it reads MRQEATCSLVLTQDAQHRKNQPPLAEEDDDRDHTDDAMPPP. Positions 68–222 constitute a Tyrosine-protein phosphatase domain; the sequence is NFAMVDHGVY…LKHLPASFSC (155 aa). The tract at residues 124–136 is WPD loop important for active site topology; it reads FGIDGSKEPFVNI. Residues Asn-135, Ile-136, and Arg-140 each contribute to the 1D-myo-inositol hexakisphosphate site. Catalysis depends on Cys-160, which acts as the Phosphocysteine intermediate.

It belongs to the protein-tyrosine phosphatase family. Atypical dual-specificity phosphatase Siw14-like subfamily.

It localises to the nucleus. Its subcellular location is the cytoplasm. It carries out the reaction 5-diphospho-1D-myo-inositol 1,2,3,4,6-pentakisphosphate + H2O = 1D-myo-inositol hexakisphosphate + phosphate + H(+). The enzyme catalyses 1,5-bis(diphospho)-1D-myo-inositol 2,3,4,6-tetrakisphosphate + H2O = 1-diphospho-1D-myo-inositol 2,3,4,5,6-pentakisphosphate + phosphate + 2 H(+). It catalyses the reaction 3,5-bis(diphospho)-1D-myo-inositol 1,2,4,6-tetrakisphosphate + H2O = 3-diphospho-1D-myo-inositol 1,2,4,5,6-pentakisphosphate + phosphate + 2 H(+). The catalysed reaction is 6-diphospho-1D-myo-inositol pentakisphosphate + H2O = 1D-myo-inositol hexakisphosphate + phosphate + H(+). Cleaves the beta-phosphate at the 5-position of soluble inositol pyrophosphates. Has highest activity on 5-diphosphoinositol 1,2,3,4,6-pentakisphosphate (5-InsP(7)). Possesses phosphotyrosine phosphatase activity in vitro. May contribute to regulation of drought stress responses. The chain is Inositol diphosphatase DSP1 from Oryza sativa subsp. japonica (Rice).